Here is a 138-residue protein sequence, read N- to C-terminus: Acidic phospholipase A2 Cvv-E6e (138 aa).

A signal peptide spans 1-16 (MRTLWILAVLLLGVEG). 7 cysteine pairs are disulfide-bonded: C42–C131, C44–C60, C59–C111, C65–C138, C66–C104, C73–C97, and C91–C102. Ca(2+)-binding residues include Y43, G45, and G47. H63 is an active-site residue. Position 64 (D64) interacts with Ca(2+). D105 is a catalytic residue.

It depends on Ca(2+) as a cofactor. In terms of tissue distribution, expressed by the venom gland.

Its subcellular location is the secreted. The catalysed reaction is a 1,2-diacyl-sn-glycero-3-phosphocholine + H2O = a 1-acyl-sn-glycero-3-phosphocholine + a fatty acid + H(+). Its function is as follows. Snake venom phospholipase A2 (PLA2) that significantly inhibits ADP-induced platelet aggregation in platelet-rich plasma of human, rabbit and guinea pig. PLA2 catalyzes the calcium-dependent hydrolysis of the 2-acyl groups in 3-sn-phosphoglycerides. The chain is Acidic phospholipase A2 Cvv-E6e from Crotalus viridis viridis (Prairie rattlesnake).